A 262-amino-acid polypeptide reads, in one-letter code: MTRIHPTAIVEPGAQIDESVEIGPYAIVGPHVTIGARTTIGSHSVIEGHTTLGEDNRIGHYASVGGRPQDMKYKDEPTKLVIGNRNTIREFTTIHTGTVQDVGVTTLGDDNWIMAYVHIGHDCTVGNHVILSSNAQMAGHVEIGDWAIVGGMSGVHQFVRIGAHSMLGGASALVQDIPPFVIAAGNKAEPHGINVEGLRRRGFSPDAISALRSAYRLLYKNGLSFEEAKVQLRELAAAGGEGDAAVKTLVEFIDASQRGIIR.

Belongs to the transferase hexapeptide repeat family. LpxA subfamily. In terms of assembly, homotrimer.

It localises to the cytoplasm. It carries out the reaction a (3R)-hydroxyacyl-[ACP] + UDP-N-acetyl-alpha-D-glucosamine = a UDP-3-O-[(3R)-3-hydroxyacyl]-N-acetyl-alpha-D-glucosamine + holo-[ACP]. The protein operates within glycolipid biosynthesis; lipid IV(A) biosynthesis; lipid IV(A) from (3R)-3-hydroxytetradecanoyl-[acyl-carrier-protein] and UDP-N-acetyl-alpha-D-glucosamine: step 1/6. Its function is as follows. Involved in the biosynthesis of lipid A, a phosphorylated glycolipid that anchors the lipopolysaccharide to the outer membrane of the cell. The sequence is that of Acyl-[acyl-carrier-protein]--UDP-N-acetylglucosamine O-acyltransferase from Burkholderia lata (strain ATCC 17760 / DSM 23089 / LMG 22485 / NCIMB 9086 / R18194 / 383).